A 293-amino-acid polypeptide reads, in one-letter code: Ribosomal protein L11 methyltransferase (293 aa).

Residues T145, G166, D188, and N230 each coordinate S-adenosyl-L-methionine.

This sequence belongs to the methyltransferase superfamily. PrmA family.

It is found in the cytoplasm. It carries out the reaction L-lysyl-[protein] + 3 S-adenosyl-L-methionine = N(6),N(6),N(6)-trimethyl-L-lysyl-[protein] + 3 S-adenosyl-L-homocysteine + 3 H(+). Its function is as follows. Methylates ribosomal protein L11. This chain is Ribosomal protein L11 methyltransferase, found in Mannheimia succiniciproducens (strain KCTC 0769BP / MBEL55E).